We begin with the raw amino-acid sequence, 614 residues long: Translation initiation factor IF-2 (614 aa).

Positions 115–283 constitute a tr-type G domain; that stretch reads ARAPIVTIMG…ILLIAELNNY (169 aa). Residues 124-131 are G1; sequence GHVDHGKT. 124 to 131 contacts GTP; sequence GHVDHGKT. A G2 region spans residues 149-153; the sequence is GITQH. Residues 170–173 form a G3 region; the sequence is DTPG. Residues 170 to 174 and 224 to 227 contribute to the GTP site; these read DTPGH and NKMD. The G4 stretch occupies residues 224-227; sequence NKMD. Residues 260–262 are G5; the sequence is SAL.

The protein belongs to the TRAFAC class translation factor GTPase superfamily. Classic translation factor GTPase family. IF-2 subfamily.

It localises to the cytoplasm. One of the essential components for the initiation of protein synthesis. Protects formylmethionyl-tRNA from spontaneous hydrolysis and promotes its binding to the 30S ribosomal subunits. Also involved in the hydrolysis of GTP during the formation of the 70S ribosomal complex. This chain is Translation initiation factor IF-2, found in Ureaplasma parvum serovar 3 (strain ATCC 27815 / 27 / NCTC 11736).